We begin with the raw amino-acid sequence, 1654 residues long: Microtubule cross-linking factor 2 (1654 aa).

The disordered stretch occupies residues Met-1–Arg-188. The segment covering Gly-55 to Ala-66 has biased composition (low complexity). Residues Gly-102–Ser-113 show a composition bias toward pro residues. A compositionally biased stretch (low complexity) spans Leu-132–Gly-147. The segment at Pro-209 to Leu-238 is required for association with Golgi apparatus membrane. 5 coiled-coil regions span residues Leu-216–Arg-279, Ser-308–Glu-349, Leu-448–Glu-546, Ile-816–Leu-843, and Ser-1079–Ala-1113. Positions Thr-348 to Ser-379 are disordered. Residues Ser-1122 to Val-1145 show a composition bias toward basic and acidic residues. Residues Ser-1122–Ser-1146 are disordered. Residues Ser-1165 and Ser-1251 each carry the phosphoserine modification. Positions Leu-1406–Lys-1505 are KR-rich domain required for microtubules binding. Disordered stretches follow at residues Arg-1427–Thr-1450, Pro-1537–Pro-1560, and Asn-1627–Gln-1654. Over residues Thr-1628–Leu-1638 the composition is skewed to basic residues.

Belongs to the MTCL family. Interacts with CLASP2. Interacts with CLASP1. The C-terminal SOGA 25 kDa form occurs as a monomer. In terms of processing, proteolytically cleaved into a C-terminal SOGA 25 kDa form that is detected in plasma. Proteolytically cleaved in primary hepatocytes into a C-terminal SOGA 80 kDa form. Phosphorylated during mitosis in a CDK1-dependent manner. As to expression, expressed in liver (at protein level).

It is found in the secreted. It localises to the cytoplasm. Its subcellular location is the cytoskeleton. The protein resides in the golgi apparatus membrane. The protein localises to the midbody. Its function is as follows. Microtubule-associated factor that enables integration of the centrosomal and Golgi-associated microtubules on the Golgi membrane, supporting directional migration. Preferentially acts on the perinuclear microtubules accumulated around the Golgi. Associates with the Golgi membrane through the N-terminal coiled-coil region and directly binds microtubules through the C-terminal domain. Required for faithful chromosome segregation during mitosis. Regulates autophagy by playing a role in the reduction of glucose production in an adiponectin- and insulin-dependent manner. This chain is Microtubule cross-linking factor 2 (Mtcl2), found in Mus musculus (Mouse).